The primary structure comprises 202 residues: Segregation and condensation protein B (202 aa).

Belongs to the ScpB family. Homodimer. Homodimerization may be required to stabilize the binding of ScpA to the Smc head domains. Component of a cohesin-like complex composed of ScpA, ScpB and the Smc homodimer, in which ScpA and ScpB bind to the head domain of Smc. The presence of the three proteins is required for the association of the complex with DNA.

The protein resides in the cytoplasm. In terms of biological role, participates in chromosomal partition during cell division. May act via the formation of a condensin-like complex containing Smc and ScpA that pull DNA away from mid-cell into both cell halves. This chain is Segregation and condensation protein B, found in Clostridium acetobutylicum (strain ATCC 824 / DSM 792 / JCM 1419 / IAM 19013 / LMG 5710 / NBRC 13948 / NRRL B-527 / VKM B-1787 / 2291 / W).